The primary structure comprises 101 residues: Small ribosomal subunit protein uS10 (101 aa).

The protein belongs to the universal ribosomal protein uS10 family. Part of the 30S ribosomal subunit.

Functionally, involved in the binding of tRNA to the ribosomes. This chain is Small ribosomal subunit protein uS10, found in Brachyspira hyodysenteriae (Treponema hyodysenteriae).